A 282-amino-acid polypeptide reads, in one-letter code: tRNA (guanine-N(7)-)-methyltransferase (282 aa).

The tract at residues 1 to 29 is disordered; sequence MPHAPAKRQKREEYKNALHEDESNAALPK. The segment covering 10–22 has biased composition (basic and acidic residues); sequence KREEYKNALHEDE. Residues G104, 153–154, and C173 contribute to the S-adenosyl-L-methionine site; that span reads NT. The active site involves D176. Residue 255-257 participates in S-adenosyl-L-methionine binding; it reads TEE.

The protein belongs to the class I-like SAM-binding methyltransferase superfamily. TrmB family. In terms of assembly, forms a complex with TRM82.

The protein resides in the nucleus. The enzyme catalyses guanosine(46) in tRNA + S-adenosyl-L-methionine = N(7)-methylguanosine(46) in tRNA + S-adenosyl-L-homocysteine. The protein operates within tRNA modification; N(7)-methylguanine-tRNA biosynthesis. In terms of biological role, catalyzes the formation of N(7)-methylguanine at position 46 (m7G46) in tRNA. This is tRNA (guanine-N(7)-)-methyltransferase from Phaeosphaeria nodorum (strain SN15 / ATCC MYA-4574 / FGSC 10173) (Glume blotch fungus).